The primary structure comprises 413 residues: MNIYAVGGAIRDELLGVPVQDRDYVVVGATPEQMAAQGFRPVGKDFPVFLHPRTQEEYALARTERKTAAGYHGFQFHYAPDVTLDEDLARRDLTVNAMAREVSPEGELVGPVIDPFDGQADLRARVFRHVSDAFVEDPVRILRIARFAARFADFTVADETLALMRRMVDAGEVDALVPERVWQEIARGLMEAKPSRMFAVLRECGALARILPEVDALWGVPQRADYHPEVDTGVHVMMVVDYAAKQGYSLPVRFAALTHDLGKATTPADVLPRHVGHEGRSVDLLKPLCERLRVPNECRDLALVVAREHGNLHRVMEMGAAALVRLFERSDALRKPARFAEMLQACESDARGRLGLDAQPYPQAERLRVALAAARSVDAGAIARGIGNDTEKIKEAVHRARIEAVAQALEIGE.

Residues glycine 8 and arginine 11 each coordinate ATP. The CTP site is built by glycine 8 and arginine 11. Residues aspartate 21 and aspartate 23 each coordinate Mg(2+). Arginine 91, arginine 143, and arginine 146 together coordinate ATP. Residues arginine 91, arginine 143, and arginine 146 each coordinate CTP. One can recognise an HD domain in the interval 232–333; the sequence is TGVHVMMVVD…VRLFERSDAL (102 aa).

It belongs to the tRNA nucleotidyltransferase/poly(A) polymerase family. Bacterial CCA-adding enzyme type 1 subfamily. Monomer. Can also form homodimers and oligomers. Mg(2+) serves as cofactor. Ni(2+) is required as a cofactor.

It catalyses the reaction a tRNA precursor + 2 CTP + ATP = a tRNA with a 3' CCA end + 3 diphosphate. It carries out the reaction a tRNA with a 3' CCA end + 2 CTP + ATP = a tRNA with a 3' CCACCA end + 3 diphosphate. Catalyzes the addition and repair of the essential 3'-terminal CCA sequence in tRNAs without using a nucleic acid template. Adds these three nucleotides in the order of C, C, and A to the tRNA nucleotide-73, using CTP and ATP as substrates and producing inorganic pyrophosphate. tRNA 3'-terminal CCA addition is required both for tRNA processing and repair. Also involved in tRNA surveillance by mediating tandem CCA addition to generate a CCACCA at the 3' terminus of unstable tRNAs. While stable tRNAs receive only 3'-terminal CCA, unstable tRNAs are marked with CCACCA and rapidly degraded. The polypeptide is Multifunctional CCA protein (Burkholderia lata (strain ATCC 17760 / DSM 23089 / LMG 22485 / NCIMB 9086 / R18194 / 383)).